A 530-amino-acid polypeptide reads, in one-letter code: Autoinducer-2 kinase (530 aa).

The protein belongs to the FGGY kinase family.

It is found in the cytoplasm. The catalysed reaction is (S)-4,5-dihydroxypentane-2,3-dione + ATP = (2S)-2-hydroxy-3,4-dioxopentyl phosphate + ADP + H(+). In terms of biological role, catalyzes the phosphorylation of autoinducer-2 (AI-2) to phospho-AI-2, which subsequently inactivates the transcriptional regulator LsrR and leads to the transcription of the lsr operon. Phosphorylates the ring-open form of (S)-4,5-dihydroxypentane-2,3-dione (DPD), which is the precursor to all AI-2 signaling molecules, at the C5 position. The chain is Autoinducer-2 kinase from Yersinia pestis bv. Antiqua (strain Antiqua).